Reading from the N-terminus, the 440-residue chain is Chromosome partition protein MukF (440 aa).

Positions L208–I236 are leucine-zipper.

This sequence belongs to the MukF family. Interacts, and probably forms a ternary complex, with MukE and MukB via its C-terminal region. The complex formation is stimulated by calcium or magnesium. It is required for an interaction between MukE and MukB.

It localises to the cytoplasm. Its subcellular location is the nucleoid. Its function is as follows. Involved in chromosome condensation, segregation and cell cycle progression. May participate in facilitating chromosome segregation by condensation DNA from both sides of a centrally located replisome during cell division. Not required for mini-F plasmid partitioning. Probably acts via its interaction with MukB and MukE. Overexpression results in anucleate cells. It has a calcium binding activity. The sequence is that of Chromosome partition protein MukF from Salmonella arizonae (strain ATCC BAA-731 / CDC346-86 / RSK2980).